Reading from the N-terminus, the 342-residue chain is Ribosomal RNA small subunit methyltransferase C (342 aa).

The protein belongs to the methyltransferase superfamily. RsmC family. Monomer.

The protein localises to the cytoplasm. The enzyme catalyses guanosine(1207) in 16S rRNA + S-adenosyl-L-methionine = N(2)-methylguanosine(1207) in 16S rRNA + S-adenosyl-L-homocysteine + H(+). Specifically methylates the guanine in position 1207 of 16S rRNA in the 30S particle. The protein is Ribosomal RNA small subunit methyltransferase C of Citrobacter koseri (strain ATCC BAA-895 / CDC 4225-83 / SGSC4696).